The chain runs to 477 residues: Prolyl tri/tetrapeptidyl aminopeptidase (477 aa).

The signal sequence occupies residues Met1–Ala27. Residues Ala28–Pro33 constitute a propeptide that is removed on maturation. Residues Gln448–Pro477 are disordered. Residues Ala462–Pro477 are compositionally biased toward basic and acidic residues.

The protein belongs to the peptidase S37 family.

The protein localises to the secreted. The protein resides in the cell surface. With respect to regulation, completely inhibited by the serine protease inhibitor phenylmethylsulfonyl fluoride. Partially inhibited by the serine protease inhibitor Pefabloc. Not inhibited by cysteine proteinase-specific or metalloproteinase-specific inhibitors. Not inhibited by prolinal or its derivatives. EDTA and EGTA both partially inhibit this enzyme. EDTA has no effect on activity. Functionally, has proline-specific tripeptidyl aminopeptidase and tetrapeptidyl aminopeptidase activity. Activity is highest against tripeptides containing an Ala-Pro motif. Involved in the final processing of transglutaminase, by removing either the tetrapeptide Phe-Arg-Ala-Pro left after TAMEP or SAM-P45 hydrolysis, or the tripeptide Arg-Ala-Pro left after SGMP II hydrolysis in a single step. The protein is Prolyl tri/tetrapeptidyl aminopeptidase (ptp) of Streptomyces mobaraensis (Streptoverticillium mobaraense).